A 1526-amino-acid polypeptide reads, in one-letter code: Probable autotransporter YpjA (1526 aa).

Residues methionine 1–alanine 29 form the signal peptide. The disordered stretch occupies residues asparagine 1173–arginine 1223. The segment covering proline 1194 to proline 1206 has biased composition (basic and acidic residues). Residues lysine 1207–valine 1219 show a composition bias toward pro residues. Positions alanine 1258–phenylalanine 1526 constitute an Autotransporter domain.

Its subcellular location is the cell outer membrane. Upon overexpression shows increased adherence to polyvinyl chloride (PVC) plates, increased mature biofilm formation. This Escherichia coli (strain K12) protein is Probable autotransporter YpjA (ypjA).